A 520-amino-acid polypeptide reads, in one-letter code: Pleckstrin homology domain-containing family O member 1-A (520 aa).

Disordered regions lie at residues 1–23 (MKKSHLVKRGLQDANQPSSQPDK), 208–296 (SLDK…GHLQ), 313–439 (IQEQ…KSTD), and 497–520 (QARQRREELSKTGMASQKLQQKSP). A PH domain is found at 20-131 (QPDKVGWIRR…WINVLNTAIT (112 aa)). The segment covering 227-241 (PASNTEAQEKTSSLP) has biased composition (polar residues). Composition is skewed to basic and acidic residues over residues 242 to 255 (RKSEISWSQEDHPR) and 333 to 347 (DSPRLRHLKGSDSPH). Residues 348-361 (SKGSSSPHSANSPS) show a composition bias toward low complexity. Composition is skewed to basic and acidic residues over residues 363–385 (RAKDSPSSKSKESPHAKSKDSPR) and 396–418 (KSIDSPDSKESSSLHMKCIDLTH). A compositionally biased stretch (polar residues) spans 420–439 (KGSQSPLSTGSNSPHMKSTD). The segment covering 497 to 506 (QARQRREELS) has biased composition (basic and acidic residues). Residues 509-520 (GMASQKLQQKSP) show a composition bias toward polar residues.

In terms of processing, C-terminal fragments could be released during apoptosis via caspase-3-dependent cleavage.

It localises to the membrane. It is found in the nucleus. The protein localises to the cytoplasm. In terms of biological role, plays a role in the regulation of the actin cytoskeleton through its interactions with actin capping protein (CP). This Danio rerio (Zebrafish) protein is Pleckstrin homology domain-containing family O member 1-A (plekho1a).